Reading from the N-terminus, the 704-residue chain is Elongation factor G (704 aa).

One can recognise a tr-type G domain in the interval 8-290; it reads ARYRNIGISA…AVIDYLPSPV (283 aa). Residues 17-24, 88-92, and 142-145 contribute to the GTP site; these read AHIDAGKT, DTPGH, and NKMD.

This sequence belongs to the TRAFAC class translation factor GTPase superfamily. Classic translation factor GTPase family. EF-G/EF-2 subfamily.

It localises to the cytoplasm. Catalyzes the GTP-dependent ribosomal translocation step during translation elongation. During this step, the ribosome changes from the pre-translocational (PRE) to the post-translocational (POST) state as the newly formed A-site-bound peptidyl-tRNA and P-site-bound deacylated tRNA move to the P and E sites, respectively. Catalyzes the coordinated movement of the two tRNA molecules, the mRNA and conformational changes in the ribosome. The polypeptide is Elongation factor G (Cronobacter sakazakii (strain ATCC BAA-894) (Enterobacter sakazakii)).